A 171-amino-acid chain; its full sequence is Putative ankyrin repeat protein PA3287 (171 aa).

ANK repeat units lie at residues 48–77 (KGDS…DPDL), 81–110 (AGQT…DVEG), and 114–143 (DGKT…RRDA).

The polypeptide is Putative ankyrin repeat protein PA3287 (Pseudomonas aeruginosa (strain ATCC 15692 / DSM 22644 / CIP 104116 / JCM 14847 / LMG 12228 / 1C / PRS 101 / PAO1)).